The following is a 215-amino-acid chain: Eukaryotic translation initiation factor 4E-1 (215 aa).

The tract at residues 1–32 is disordered; the sequence is MAEDTETRPASAGAEEREEGEIADDGDGSSAA. Positions 16–27 are enriched in acidic residues; the sequence is EREEGEIADDGD. 2 EIF4G-binding regions span residues 40–43 and 50–86; these read HPLE and FDNP…NNIH. Residues 58 to 63, lysine 90, and 108 to 109 each bind mRNA; these read RQVAWG and WE. Cysteine 113 and cysteine 151 form a disulfide bridge. An EIF4G-binding region spans residues 134 to 143; sequence HTLLAMIGEQ. MRNA-binding positions include 158–163 and 203–207; these read RQKQER and KRSDK.

Belongs to the eukaryotic initiation factor 4E family. As to quaternary structure, EIF4F is a multi-subunit complex, the composition of which varies with external and internal environmental conditions. It is composed of at least EIF4A, EIF4E and EIF4G. EIF4E is also known to interact with other partners. In higher plants two isoforms of EIF4F have been identified, named isoform EIF4F and isoform EIF(iso)4F. Isoform EIF4F has subunits p220 and p26, whereas isoform EIF(iso)4F has subunits p82 and p28. In terms of processing, according to the redox status, the Cys-113-Cys-151 disulfide bridge may have a role in regulating protein function by affecting its ability to bind capped mRNA.

Its subcellular location is the nucleus. It localises to the cytoplasm. Functionally, component of the protein complex eIF4F, which is involved in the recognition of the mRNA cap, ATP-dependent unwinding of 5'-terminal secondary structure and recruitment of mRNA to the ribosome. Recognizes and binds the 7-methylguanosine-containing mRNA cap during an early step in the initiation of protein synthesis and facilitates ribosome binding by inducing the unwinding of the mRNAs secondary structures. In Triticum aestivum (Wheat), this protein is Eukaryotic translation initiation factor 4E-1.